Here is a 561-residue protein sequence, read N- to C-terminus: Nucleoprotein (561 aa).

A binding site for the cap structure m7GTP region spans residues 53–237 (MRKDKRSEAD…ITQEPAQINI (185 aa)). The Mn(2+) site is built by Asp-380 and Glu-382. The Zn(2+) site is built by Glu-390, Cys-497, His-500, and Cys-521. Asp-525 is a Mn(2+) binding site.

It belongs to the arenaviridae nucleocapsid protein family. As to quaternary structure, homomultimerizes to form the nucleocapsid. Binds to viral genomic RNA. Interacts with glycoprotein G2. Interacts with protein Z; this interaction probably directs the encapsidated genome to budding sites. Interacts with protein L; this interaction does not interfere with Z-L interaction. Interacts with host IKBKE (via Protein kinase domain); the interaction inhibits IKBKE kinase activity.

The protein localises to the virion. Its subcellular location is the host cytoplasm. Functionally, encapsidates the genome, protecting it from nucleases. The encapsidated genomic RNA is termed the nucleocapsid (NC). Serves as template for viral transcription and replication. The increased presence of protein N in host cell does not seem to trigger the switch from transcription to replication as observed in other negative strain RNA viruses. Through the interaction with host IKBKE, strongly inhibits the phosphorylation and nuclear translocation of host IRF3, a protein involved in interferon activation pathway, leading to the inhibition of interferon-beta and IRF3-dependent promoters activation. Also encodes a functional 3'-5' exoribonuclease that degrades preferentially dsRNA substrates and thereby participates in the suppression of interferon induction. The sequence is that of Nucleoprotein from Allpahuayo mammarenavirus (isolate Rat/Peru/CLHP-2472/1997) (ALLV).